Consider the following 189-residue polypeptide: uncharacterized protein (189 aa).

The HTH tetR-type domain occupies 2 to 62; the sequence is RPTNKRILDA…ALLSQHSSNR (61 aa). Positions 25-44 form a DNA-binding region, H-T-H motif; sequence TTKEIAEKANVSEATIFRNF.

This is an uncharacterized protein from Bacillus subtilis (strain 168).